A 1048-amino-acid polypeptide reads, in one-letter code: Cysteine-rich motor neuron 1 protein (1048 aa).

Positions 1–46 are cleaved as a signal peptide; sequence MYLAAVSAGRRRPGGDGGGGGGGWHLAAAGWLLLLALLLGQPGTRA. The region spanning 47–124 is the IGFBP N-terminal domain; the sequence is LVCLPCDESK…EYEVGVCEDE (78 aa). Over 47–952 the chain is Extracellular; it reads LVCLPCDESK…HPSEDASVSS (906 aa). 4 cysteine pairs are disulfide-bonded: Cys-49/Cys-72, Cys-52/Cys-74, Cys-57/Cys-75, and Cys-63/Cys-78. Asn-83 carries N-linked (GlcNAc...) asparagine glycosylation. 2 cysteine pairs are disulfide-bonded: Cys-86-Cys-102 and Cys-96-Cys-121. Residues 326 to 328 carry the Cell attachment site motif; sequence RGD. VWFC domains are found at residues 346-403 and 413-469; these read PTCI…PVCE and AGCY…PVCE. 4 Antistasin-like domains span residues 481-510, 517-544, 551-576, and 579-604; these read CELL…ICQC, CTGL…ICQC, CKPI…ICRC, and CPEM…ICKC. The N-linked (GlcNAc...) asparagine glycan is linked to Asn-486. VWFC domains are found at residues 618 to 675 and 689 to 747; these read GSCL…PSCP and SICH…PQCP. The N-linked (GlcNAc...) asparagine glycan is linked to Asn-758. VWFC domains follow at residues 763–821 and 829–886; these read SYCK…PYCI and VVCH…PMCP. Residues 904-906 carry the Cell attachment site motif; that stretch reads RGD. N-linked (GlcNAc...) asparagine glycosylation is present at Asn-913. Residues 953 to 973 form a helical membrane-spanning segment; sequence VALVTVPITIALLVIIVFLLI. The Cytoplasmic portion of the chain corresponds to 974–1048; it reads NQKKQWIPVS…LQADNFYQTV (75 aa).

The protein localises to the membrane. Functionally, may play a role in CNS development by interacting with growth factors implicated in motor neuron differentiation and survival. The chain is Cysteine-rich motor neuron 1 protein (CRIM1) from Gallus gallus (Chicken).